We begin with the raw amino-acid sequence, 246 residues long: Dihydroorotate dehydrogenase B (NAD(+)), electron transfer subunit (246 aa).

One can recognise an FAD-binding FR-type domain in the interval Glu-3 to Val-97. Residues Arg-50–Ser-53 and Gly-72–Thr-73 each bind FAD. [2Fe-2S] cluster contacts are provided by Cys-211, Cys-216, Cys-219, and Cys-231.

The protein belongs to the PyrK family. In terms of assembly, heterotetramer of 2 PyrK and 2 PyrD type B subunits. [2Fe-2S] cluster serves as cofactor. The cofactor is FAD.

It participates in pyrimidine metabolism; UMP biosynthesis via de novo pathway; orotate from (S)-dihydroorotate (NAD(+) route): step 1/1. Its function is as follows. Responsible for channeling the electrons from the oxidation of dihydroorotate from the FMN redox center in the PyrD type B subunit to the ultimate electron acceptor NAD(+). In Clostridium acetobutylicum (strain ATCC 824 / DSM 792 / JCM 1419 / IAM 19013 / LMG 5710 / NBRC 13948 / NRRL B-527 / VKM B-1787 / 2291 / W), this protein is Dihydroorotate dehydrogenase B (NAD(+)), electron transfer subunit.